The sequence spans 239 residues: Serine protease SplF (239 aa).

A signal peptide spans 1–36 (MNKNIIIKSIAALTILTSITGVGTTMVEGIQQTAKA). Active-site charge relay system residues include His-75, Asp-114, and Ser-192.

This sequence belongs to the peptidase S1B family.

It is found in the secreted. The protein is Serine protease SplF (splF) of Staphylococcus aureus (strain NCTC 8325 / PS 47).